A 1869-amino-acid polypeptide reads, in one-letter code: Chitin synthase csm1 (1869 aa).

Residues 1–778 (MAQHRCVGGN…CWMEIAQLSD (778 aa)) form the Myosin motor domain. Position 103–110 (103–110 (GESGSGKT)) interacts with ATP. N-linked (GlcNAc...) asparagine glycosylation is found at Asn-122, Asn-290, Asn-427, and Asn-558. The interval 579 to 653 (HPQERTTVMQ…KPSEEGASGQ (75 aa)) is disordered. The segment covering 583–593 (RTTVMQASVSS) has biased composition (polar residues). Positions 658-682 (LDNVTKSFHAQNTNAYFVFCLKPND) are actin-binding. An N-linked (GlcNAc...) asparagine glycan is attached at Asn-660. 2 helical membrane passes run 880–900 (WVFI…QHLG) and 919–939 (FIIW…PMLV). Asn-1029, Asn-1054, and Asn-1120 each carry an N-linked (GlcNAc...) asparagine glycan. The helical transmembrane segment at 1191–1211 (FILAVTIILCSIIAFKFFAAL) threads the bilayer. N-linked (GlcNAc...) asparagine glycosylation is found at Asn-1448 and Asn-1554. The next 3 helical transmembrane spans lie at 1579–1599 (FIVF…AYIV), 1612–1632 (VPVL…IIFI), and 1639–1659 (MIAW…GLPL). Residues 1811–1866 (LPSDDALLAEIREILRTADLMTVTKKGVKQELERRFGVNLDSRRAYINSATEALLS) enclose the DEK-C domain.

This sequence in the N-terminal section; belongs to the TRAFAC class myosin-kinesin ATPase superfamily. Myosin family. The protein in the C-terminal section; belongs to the chitin synthase family. Class V subfamily.

It localises to the cell membrane. It is found in the cell septum. Its subcellular location is the cell tip. The catalysed reaction is [(1-&gt;4)-N-acetyl-beta-D-glucosaminyl](n) + UDP-N-acetyl-alpha-D-glucosamine = [(1-&gt;4)-N-acetyl-beta-D-glucosaminyl](n+1) + UDP + H(+). Polymerizes chitin, a structural polymer of the cell wall and septum, by transferring the sugar moiety of UDP-GlcNAc to the non-reducing end of the growing chitin polymer. Involved in mycelial growth. In Pyricularia grisea (Crabgrass-specific blast fungus), this protein is Chitin synthase csm1.